A 420-amino-acid polypeptide reads, in one-letter code: Small ribosomal subunit protein mS75 (420 aa).

The N-terminal 11 residues, 1–11 (MYNLSRIIYRF), are a transit peptide targeting the mitochondrion. Disordered regions lie at residues 99-120 (RQKN…DVMS) and 390-420 (RYSP…GKQT). A compositionally biased stretch (polar residues) spans 102–114 (NAANPSSDNTPSD). Basic residues predominate over residues 396–409 (QKRRSKRKQKRKER).

In terms of assembly, component of the mitochondrial ribosome small subunit. Expressed at high levels in reproductive organs and, at lower levels, ubiquitously.

Its subcellular location is the mitochondrion. Its function is as follows. Essential for fertility (male and female gametophyte functions and development). Required for the integrity of female gametic mitochondria. Modulates male gametophyte functions, including pollen tube growth and style penetration. Involved in mitochondrial-driven cell-to-cell communication in embryo sacs during female gametes maturation (including embryogenesis initiation and endosperm development), especially for reciprocal signaling between central and egg cells which regulates reciprocal development. This is Small ribosomal subunit protein mS75 from Arabidopsis thaliana (Mouse-ear cress).